Reading from the N-terminus, the 124-residue chain is Seripauperin-19 (124 aa).

An N-terminal signal peptide occupies residues 1 to 20 (MVKLTSIAAGVAAIAAGVAA).

The protein belongs to the SRP1/TIP1 family. Seripauperin subfamily.

The polypeptide is Seripauperin-19 (PAU19) (Saccharomyces cerevisiae (strain ATCC 204508 / S288c) (Baker's yeast)).